Consider the following 83-residue polypeptide: Cobrotoxin (83 aa).

Residues 1–21 form the signal peptide; the sequence is MKTLLLTLLVVTIVCLDLGYT. Cystine bridges form between cysteine 24/cysteine 45, cysteine 38/cysteine 62, cysteine 64/cysteine 75, and cysteine 76/cysteine 81.

This sequence belongs to the three-finger toxin family. Short-chain subfamily. Type I alpha-neurotoxin sub-subfamily. Expressed by the venom gland.

The protein resides in the secreted. In terms of biological role, binds to muscle nicotinic acetylcholine receptor (nAChR) and inhibit acetylcholine from binding to the receptor, thereby impairing neuromuscular transmission. Has a higher toxicity than cobrotoxin-b. In vivo, when tested on rat arthritis models, shows anti-inflammation and immunosuppression effects. The sequence is that of Cobrotoxin from Naja atra (Chinese cobra).